A 282-amino-acid polypeptide reads, in one-letter code: Rhomboid protease GlpG (282 aa).

6 helical membrane-spanning segments follow: residues 96-116 (AGPL…WMQF), 144-164 (GLLH…WYLG), 176-196 (LFVI…LFSG), 197-217 (SHFG…WLTG), 225-242 (IGVP…LIVG), and 247-269 (FGLS…MALW). Residue Ser-203 is the Nucleophile of the active site. His-256 is an active-site residue.

Belongs to the peptidase S54 family.

The protein resides in the cell inner membrane. It carries out the reaction Cleaves type-1 transmembrane domains using a catalytic dyad composed of serine and histidine that are contributed by different transmembrane domains.. Its function is as follows. Rhomboid-type serine protease that catalyzes intramembrane proteolysis. This chain is Rhomboid protease GlpG, found in Photorhabdus laumondii subsp. laumondii (strain DSM 15139 / CIP 105565 / TT01) (Photorhabdus luminescens subsp. laumondii).